We begin with the raw amino-acid sequence, 428 residues long: Gamma-glutamyl phosphate reductase (428 aa).

The protein belongs to the gamma-glutamyl phosphate reductase family.

The protein resides in the cytoplasm. It carries out the reaction L-glutamate 5-semialdehyde + phosphate + NADP(+) = L-glutamyl 5-phosphate + NADPH + H(+). The protein operates within amino-acid biosynthesis; L-proline biosynthesis; L-glutamate 5-semialdehyde from L-glutamate: step 2/2. In terms of biological role, catalyzes the NADPH-dependent reduction of L-glutamate 5-phosphate into L-glutamate 5-semialdehyde and phosphate. The product spontaneously undergoes cyclization to form 1-pyrroline-5-carboxylate. The polypeptide is Gamma-glutamyl phosphate reductase (Streptomyces coelicolor (strain ATCC BAA-471 / A3(2) / M145)).